The sequence spans 306 residues: GTPase IMAP family member 1 (306 aa).

A disordered region spans residues M1–Q21. The Cytoplasmic segment spans residues M1 to R272. The AIG1-type G domain occupies E25–Q229. A G1 region spans residues G34 to S41. GTP contacts are provided by residues G34–A42 and S55. The tract at residues S61–A65 is G2. Residues D82–D85 are G3. The G4 stretch occupies residues T152–E155. Residues R153 to E155 and N190 contribute to the GTP site. The segment at D189–R191 is G5. A helical; Anchor for type IV membrane protein transmembrane segment spans residues S273–L292. Residues H293–D306 are Lumenal-facing.

Belongs to the TRAFAC class TrmE-Era-EngA-EngB-Septin-like GTPase superfamily. AIG1/Toc34/Toc159-like paraseptin GTPase family. IAN subfamily. In terms of tissue distribution, predominantly expressed in the spleen and to a lesser extent in the lymph nodes. Detected in T-cells.

It is found in the endoplasmic reticulum membrane. Its subcellular location is the golgi apparatus membrane. May regulate lymphocyte survival. Required for normal levels of mature T-lymphocytes and mature B-cells. The chain is GTPase IMAP family member 1 (GIMAP1) from Homo sapiens (Human).